We begin with the raw amino-acid sequence, 469 residues long: UDP-N-acetylmuramate--L-alanine ligase (469 aa).

112 to 118 (GTHGKTT) contributes to the ATP binding site.

The protein belongs to the MurCDEF family.

It localises to the cytoplasm. The enzyme catalyses UDP-N-acetyl-alpha-D-muramate + L-alanine + ATP = UDP-N-acetyl-alpha-D-muramoyl-L-alanine + ADP + phosphate + H(+). The protein operates within cell wall biogenesis; peptidoglycan biosynthesis. Functionally, cell wall formation. The chain is UDP-N-acetylmuramate--L-alanine ligase from Leptothrix cholodnii (strain ATCC 51168 / LMG 8142 / SP-6) (Leptothrix discophora (strain SP-6)).